Reading from the N-terminus, the 662-residue chain is DNA topoisomerase 4 subunit B (662 aa).

ATP contacts are provided by residues tyrosine 20, asparagine 60, aspartate 87, 129–135 (GLHGVGV), and lysine 359. The 115-residue stretch at 439 to 553 (TELFIVEGDS…DGHLYLAKPP (115 aa)) folds into the Toprim domain. 3 residues coordinate Mg(2+): glutamate 445, aspartate 518, and aspartate 520.

This sequence belongs to the type II topoisomerase family. ParE type 1 subfamily. In terms of assembly, heterotetramer composed of ParC and ParE. Requires Mg(2+) as cofactor. Mn(2+) serves as cofactor. Ca(2+) is required as a cofactor.

The catalysed reaction is ATP-dependent breakage, passage and rejoining of double-stranded DNA.. Topoisomerase IV is essential for chromosome segregation. It relaxes supercoiled DNA. Performs the decatenation events required during the replication of a circular DNA molecule. This Rickettsia bellii (strain RML369-C) protein is DNA topoisomerase 4 subunit B.